We begin with the raw amino-acid sequence, 530 residues long: Type 2 DNA topoisomerase 6 subunit B (530 aa).

ATP-binding positions include Asn42, Asp76, 97 to 98 (SK), 106 to 113 (GMYGLGVK), and Lys427.

It belongs to the TOP6B family. In terms of assembly, homodimer. Heterotetramer of two Top6A and two Top6B chains.

It carries out the reaction ATP-dependent breakage, passage and rejoining of double-stranded DNA.. Functionally, relaxes both positive and negative superturns and exhibits a strong decatenase activity. This chain is Type 2 DNA topoisomerase 6 subunit B, found in Saccharolobus islandicus (strain M.16.4 / Kamchatka #3) (Sulfolobus islandicus).